Reading from the N-terminus, the 384-residue chain is tRNA-specific 2-thiouridylase MnmA (384 aa).

Residues 1-26 (MDEGIRASGGIRACQTGKQKQGRKRP) are disordered. ATP contacts are provided by residues 36 to 43 (GMSGGVDS) and methionine 62. The interaction with target base in tRNA stretch occupies residues 122-124 (NPD). Cysteine 127 acts as the Nucleophile in catalysis. Cysteine 127 and cysteine 223 form a disulfide bridge. Glycine 151 provides a ligand contact to ATP. Residues 173-175 (KDQ) form an interaction with tRNA region. Catalysis depends on cysteine 223, which acts as the Cysteine persulfide intermediate. Positions 334–335 (RY) are interaction with tRNA.

It belongs to the MnmA/TRMU family.

Its subcellular location is the cytoplasm. It carries out the reaction S-sulfanyl-L-cysteinyl-[protein] + uridine(34) in tRNA + AH2 + ATP = 2-thiouridine(34) in tRNA + L-cysteinyl-[protein] + A + AMP + diphosphate + H(+). Its function is as follows. Catalyzes the 2-thiolation of uridine at the wobble position (U34) of tRNA, leading to the formation of s(2)U34. The sequence is that of tRNA-specific 2-thiouridylase MnmA from Chromobacterium violaceum (strain ATCC 12472 / DSM 30191 / JCM 1249 / CCUG 213 / NBRC 12614 / NCIMB 9131 / NCTC 9757 / MK).